The primary structure comprises 360 residues: MIFSGKFTSHLLNYGFKPNNLRLLSTSTHPTIYFTGIQPTGIPHLGNFFGSIEPWTELQNSVDKNILMMLSVVDQHAISLGPLPANELRQNTHQMTASLIACGVDPNRTLLFRQSDVPQIAQISWILGSLQTTSKLARLPQYKEKKERFKKGDIPVGLLTYPLLQAADVLTFKATTVPVGEDQSQHLNLLGGLAYAFNKTYETEIFPIPKQLTRESHARIRSLREPEKKMSKSSGGPRSRIEITDSRSTIIEKCQKAQSDNAGKVTYDKENRLAVSNLLDLYSAVTKTQTSEIDFSNWTTLDLKMNLAEAVDKRLAPIRQKFEELQNTGEVDKVLTENGEKAREIAEKNLEEIRRTIGFL.

Residues Gln-38 and 44–47 (HLGN) each bind ATP. Residues 39–47 (PTGIPHLGN) carry the 'HIGH' region motif. L-tryptophan is bound at residue Asp-168. Residues 180 to 182 (GED) and 229 to 233 (KMSKS) contribute to the ATP site. Residues 220–230 (IRSLREPEKKM) are compositionally biased toward basic and acidic residues. Residues 220 to 241 (IRSLREPEKKMSKSSGGPRSRI) form a disordered region. The 'KMSKS' region motif lies at 229-233 (KMSKS).

It belongs to the class-I aminoacyl-tRNA synthetase family.

Its subcellular location is the mitochondrion matrix. The enzyme catalyses tRNA(Trp) + L-tryptophan + ATP = L-tryptophyl-tRNA(Trp) + AMP + diphosphate + H(+). Functionally, catalyzes the attachment of tryptophan to tRNA(Trp). This chain is Tryptophan--tRNA ligase, mitochondrial, found in Caenorhabditis elegans.